Reading from the N-terminus, the 88-residue chain is Small ribosomal subunit protein uS15 (88 aa).

This sequence belongs to the universal ribosomal protein uS15 family. In terms of assembly, part of the 30S ribosomal subunit. Forms a bridge to the 50S subunit in the 70S ribosome, contacting the 23S rRNA.

Its function is as follows. One of the primary rRNA binding proteins, it binds directly to 16S rRNA where it helps nucleate assembly of the platform of the 30S subunit by binding and bridging several RNA helices of the 16S rRNA. In terms of biological role, forms an intersubunit bridge (bridge B4) with the 23S rRNA of the 50S subunit in the ribosome. This Psychrobacter arcticus (strain DSM 17307 / VKM B-2377 / 273-4) protein is Small ribosomal subunit protein uS15.